Consider the following 449-residue polypeptide: Major capsid protein (449 aa).

In terms of domain architecture, BIG2 spans 349-427 (AVTQVIVSPA…TVDIGTADEP (79 aa)).

The protein belongs to the phi29likevirus major capsid protein family. Homohexamer. Homopentamer. The prolate capsid is composed of pentamers and hexamers of the capsid protein.

Its subcellular location is the virion. Assembles to form a prolate capsid shell of about 54 nm in length and 45 nm in width, with a T=3, Q=5 symmetry. The polypeptide is Major capsid protein (8) (Bacillus subtilis (Bacteriophage B103)).